The chain runs to 303 residues: E3 ubiquitin-protein ligase CHIP (303 aa).

Positions 1–10 are enriched in basic and acidic residues; it reads MKGKEEKEGG. Positions 1–30 are disordered; that stretch reads MKGKEEKEGGARLGAGGGSPEKSPSAQELK. A Glycyl lysine isopeptide (Lys-Gly) (interchain with G-Cter in ubiquitin) cross-link involves residue Lys-2. Residue Ser-19 is modified to Phosphoserine. Residue Lys-22 forms a Glycyl lysine isopeptide (Lys-Gly) (interchain with G-Cter in ubiquitin) linkage. A phosphoserine mark is found at Ser-23 and Ser-25. 3 TPR repeats span residues 26-59, 60-93, and 95-127; these read AQELKEQGNRLFVGRKYPEAAACYGRAITRNPLV, AVYYTNRALCYLKMQQHEQALADCRRALELDGQS, and KAHFFLGQCQLEMESYDEAIANLQRAYSLAKEQ. Residues 101-200 form a required for interaction with MAPK7 region; the sequence is GQCQLEMESY…SHVRAQQACI (100 aa). The interval 142 to 196 is required for interaction with and ubiquitination of MYOCD; that stretch reads AKKKRWNSIEERRIHQESELHSYLSRLIAAERERELEECQRNHEGDEDDSHVRAQ. The interval 143–197 is required for interaction with FOXO1; sequence KKKRWNSIEERRIHQESELHSYLSRLIAAERERELEECQRNHEGDEDDSHVRAQQ. A required for ubiquitination of FOXO1 region spans residues 143 to 303; the sequence is KKKRWNSIEE…ISENGWVEDY (161 aa). Ser-149 is modified (phosphoserine). Glycyl lysine isopeptide (Lys-Gly) (interchain with G-Cter in ubiquitin) cross-links involve residues Lys-221 and Lys-255. The U-box domain maps to 226 to 300; sequence DIPDYLCGKI…DAFISENGWV (75 aa). Residue Ser-273 is modified to Phosphoserine.

In terms of assembly, homodimer. Interacts with BAG2. Interacts with E2 ubiquitin conjugating enzymes UBE2D1, UBE2D2 and UBE2D3. Detected in a ternary complex containing STUB1, HSPA1A and HSPBP1. Part of a complex composed of STUB1/CHIP, VCP/p97, CHRNA3, and UBXN2A that modulates the ubiquitination and endoplasmic reticulum-associated degradation (ERAD) of CHRNA3. Within the complex UBXN2A acts as a scaffold protein required for the interaction of CHRNA3 with VCP/p97, this interaction also inhibits CHRNA3 ubiquitination by STUB1/CHIP and subsequently ERAD. Interacts with MKKS. Interacts with DNAAF4. Interacts (when monoubiquitinated) with ATXN3. Interacts with UBE2W. Interacts (via the U-box domain) with the UBE2V2-UBE2N heterodimer; the complex has a specific 'Lys-63'-linked polyubiquitination activity. Interacts with DNAJB6. Interacts with FLCN. Interacts with HSP90AA1. Interacts with HSP90. Interacts with UBE2N and UBE2V1. Interacts (via TPR repeats) with HSPA8 (via C-terminus). Interacts (via TPR repeats) with HSPA1A (via C-terminus). Interacts with the non-acetylated form of HSPA1A and HSPA1B. Interacts with SMAD3 and HSP90AB1. Interacts with UBE4B. Interacts with PRMT5. Interacts with MYOCD (via C-terminus). Interacts with FOXO1 (when phosphorylated on 'Ser-256'). Interacts with MAPK7/ERK5; the interaction is enhanced in the presence of IGF1 or MAP2K5 and promotes STUB1/CHIP E3 ligase activity. Interacts with and ubiquitinates ESR1; the interaction is promoted in the absence of estradiol (17-beta-estradiol/E2). Interacts with ESR2. Interacts with and ubiquitinates NFATC3; HSPA1A/HSP70 is required as a co-chaperone. In macrophages, interacts with PAQR3; the interaction promotes PPARG poylubiquitination and STUB1-mediated degradation. Component of the chaperone-assisted selective autophagy (CASA) complex consisting of BAG3, HSPA8/HSC70, HSPB8 and STUB1/CHIP. Post-translationally, monoubiquitinated at Lys-2 following cell stress by UBE2W, promoting the interaction with ATXN3. Auto-ubiquitinated; mediated by UBE2D1 and UBE2D2 and enhanced in the presence of MAP2K5. In terms of tissue distribution, expressed in differentiated myotubes (at protein level). Highly expressed in skeletal muscle, heart, pancreas, brain and placenta. Detected in kidney, liver and lung.

The protein resides in the cytoplasm. It is found in the nucleus. It localises to the mitochondrion. It catalyses the reaction S-ubiquitinyl-[E2 ubiquitin-conjugating enzyme]-L-cysteine + [acceptor protein]-L-lysine = [E2 ubiquitin-conjugating enzyme]-L-cysteine + N(6)-ubiquitinyl-[acceptor protein]-L-lysine.. It functions in the pathway protein modification; protein ubiquitination. Its function is as follows. E3 ubiquitin-protein ligase which targets misfolded chaperone substrates towards proteasomal degradation. Plays a role in the maintenance of mitochondrial morphology and promotes mitophagic removal of dysfunctional mitochondria; thereby acts as a protector against apoptosis in response to cellular stress. Negatively regulates vascular smooth muscle contraction, via degradation of the transcriptional activator MYOCD and subsequent loss of transcription of genes involved in vascular smooth muscle contraction. Promotes survival and proliferation of cardiac smooth muscle cells via ubiquitination and degradation of FOXO1, resulting in subsequent repression of FOXO1-mediated transcription of pro-apoptotic genes. Ubiquitinates ICER-type isoforms of CREM and targets them for proteasomal degradation, thereby acts as a positive effector of MAPK/ERK-mediated inhibition of apoptosis in cardiomyocytes. Inhibits lipopolysaccharide-induced apoptosis and hypertrophy in cardiomyocytes, via ubiquitination and subsequent proteasomal degradation of NFATC3. Collaborates with ATXN3 in the degradation of misfolded chaperone substrates: ATXN3 restricting the length of ubiquitin chain attached to STUB1/CHIP substrates and preventing further chain extension. Ubiquitinates NOS1 in concert with Hsp70 and Hsp40. Modulates the activity of several chaperone complexes, including Hsp70, Hsc70 and Hsp90. Ubiquitinates CHRNA3 targeting it for endoplasmic reticulum-associated degradation in cortical neurons, as part of the STUB1-VCP-UBXN2A complex. Ubiquitinates and promotes ESR1 proteasomal degradation in response to age-related circulating estradiol (17-beta-estradiol/E2) decline, thereby promotes neuronal apoptosis in response to ischemic reperfusion injury. Mediates transfer of non-canonical short ubiquitin chains to HSPA8 that have no effect on HSPA8 degradation. Mediates polyubiquitination of DNA polymerase beta (POLB) at 'Lys-41', 'Lys-61' and 'Lys-81', thereby playing a role in base-excision repair: catalyzes polyubiquitination by amplifying the HUWE1/ARF-BP1-dependent monoubiquitination and leading to POLB-degradation by the proteasome. Mediates polyubiquitination of CYP3A4. Ubiquitinates EPHA2 and may regulate the receptor stability and activity through proteasomal degradation. Acts as a co-chaperone for HSPA1A and HSPA1B chaperone proteins and promotes ubiquitin-mediated protein degradation. Negatively regulates the suppressive function of regulatory T-cells (Treg) during inflammation by mediating the ubiquitination and degradation of FOXP3 in a HSPA1A/B-dependent manner. Catalyzes monoubiquitination of SIRT6, preventing its degradation by the proteasome. Likely mediates polyubiquitination and down-regulates plasma membrane expression of PD-L1/CD274, an immune inhibitory ligand critical for immune tolerance to self and antitumor immunity. Negatively regulates TGF-beta signaling by modulating the basal level of SMAD3 via ubiquitin-mediated degradation. Plays a role in the degradation of TP53. Mediates ubiquitination of RIPK3 leading to its subsequent proteasome-dependent degradation. May regulate myosin assembly in striated muscles together with UBE4B and VCP/p97 by targeting myosin chaperone UNC45B for proteasomal degradation. Ubiquitinates PPARG in macrophages playing a role in M2 macrophages polarization and angiogenesis. This Homo sapiens (Human) protein is E3 ubiquitin-protein ligase CHIP.